The following is a 298-amino-acid chain: MFTGSIVALITPMKKSGKIDFDSIKGLIEYHIVNNTSAILAIGTTGENFSLTFEEQCNIVKYIFETCDKKIPVIAGIISSNIENIKKQINFYNKINISGILISTPYYSCPTQNGIFNYFKEISKNTDIPQIIYNNPKRTGCDILPETVSKLSYIKNIIGIKDSSKDLSRVKKIKFFSKKNFCLLCGDDINILDFMQLGGCGVISTAANIIAYESSSLCRLINNRHYYKAEKLYYNILDLYKILLIAPNPTPIKWACNFLGLIKTKYIRLPMIGLNKKEIFMFKKILNKIKLKSKINCI.

Residue threonine 45 coordinates pyruvate. Residue tyrosine 133 is the Proton donor/acceptor of the active site. Lysine 161 acts as the Schiff-base intermediate with substrate in catalysis. Isoleucine 203 contributes to the pyruvate binding site.

This sequence belongs to the DapA family. Homotetramer; dimer of dimers.

The protein localises to the cytoplasm. The catalysed reaction is L-aspartate 4-semialdehyde + pyruvate = (2S,4S)-4-hydroxy-2,3,4,5-tetrahydrodipicolinate + H2O + H(+). It functions in the pathway amino-acid biosynthesis; L-lysine biosynthesis via DAP pathway; (S)-tetrahydrodipicolinate from L-aspartate: step 3/4. In terms of biological role, catalyzes the condensation of (S)-aspartate-beta-semialdehyde [(S)-ASA] and pyruvate to 4-hydroxy-tetrahydrodipicolinate (HTPA). This is 4-hydroxy-tetrahydrodipicolinate synthase from Wigglesworthia glossinidia brevipalpis.